Reading from the N-terminus, the 684-residue chain is MAEGEELLPLSTSGGDSWEKDLEEALEAGGCDLETLRNIIQGRPLPAELRAKVWKIALNVAGKGDSLASWDGILDLPEQNTIHKDCLEFIEQLSVPEEKAAELLLDIESVITFYCKSRSVKYSTSLSWIHLLKPLICLQLPRSDLYNCFYAVMNKYIPRDCSLKGRPFHLFRLLIQYHEPELCSFLDTKKITPDSYALNWLGSLFAHYCSTEVTQAIWDGYLQQADPFFIYFLMLIILVNTKEVILAQESDSKEEVIRFLESTPASLNLEDIEDLFSLAQYYCSKTPASFRKDNHHLFGSTLLGIKDDEADLSQALCLAVSVSEILQANQLQGEGVRFFVVDCRPAEQYNAGHLATAFHLDSDLMLQNPSEFAQSVKSLLEAQKQSIESGSIAGGEHLCFMGSGREEEDMYMNMVLAHFLQKNKEYVSIASGGFMALQQHLADINVEGPESGYGHWIASTSGSRGSISSVDGESCNGSNDRGMKSLVSKMTVALKTKSVTVREKVISFIENSSTPVDRHVSSSDRVGKPYRGVKPVFSIGDEEEYDTDEIDSSSMSDDDRKEVVNIQTWINKPDIKHHFPCKEVKESGHMFPSHLLVTATHMYCLREILSRKGLAYIQSRQALNSVVKITSKKKHPELITFKYGNSSASGIEILAIERYLIPNAGDATRAIKQQIMKVLDALES.

Residues 44–225 enclose the Rab-GAP TBC domain; the sequence is PLPAELRAKV…AIWDGYLQQA (182 aa). S300 is subject to Phosphoserine. Residues 334 to 446 form the Rhodanese domain; it reads EGVRFFVVDC…LQQHLADINV (113 aa). Phosphoserine occurs at positions 469, 474, and 507. Phosphothreonine is present on T514. Residues 514–558 form a may mediate the interaction with C17orf75, FAM91A1 and WDR11 region; it reads TPVDRHVSSSDRVGKPYRGVKPVFSIGDEEEYDTDEIDSSSMSDD. The interval 514–684 is may mediate the interaction with WASHC1; the sequence is TPVDRHVSSS…IMKVLDALES (171 aa). S556 bears the Phosphoserine mark. The tract at residues 559–684 is may mediate the interaction with FKBP15 and WASHC2; required for endosome to Golgi trafficking; sequence DRKEVVNIQT…IMKVLDALES (126 aa).

As to quaternary structure, directly interacts with GOLGA1 and GOLGA4. Interacts with FAM91A1, C17ORF75 and WDR11; the interaction recruits TBC1D23 to AP-1-derived vesicles. Directly interacts with WASHC1 and WASHC2/FAM21. Interacts with FKBP15.

Its subcellular location is the golgi apparatus. It localises to the trans-Golgi network. It is found in the cytoplasmic vesicle. In terms of biological role, putative Rab GTPase-activating protein which plays a role in vesicular trafficking. Involved in endosome-to-Golgi trafficking. Acts as a bridging protein by binding simultaneously to golgins, including GOLGA1 and GOLGA4, located at the trans-Golgi, and to the WASH complex, located on endosome-derived vesicles. Together with WDR11 complex facilitates the golgin-mediated capture of vesicles generated using AP-1. Plays a role in brain development, including in cortical neuron positioning. May also be important for neurite outgrowth, possibly through its involvement in membrane trafficking and cargo delivery, 2 processes which are essential for axonal and dendritic growth. May act as a general inhibitor of innate immunity signaling, strongly inhibiting multiple TLR and dectin/CLEC7A-signaling pathways. Does not alter initial activation events, but instead affects maintenance of inflammatory gene expression several hours after bacterial lipopolysaccharide (LPS) challenge. This chain is TBC1 domain family member 23 (Tbc1d23), found in Mus musculus (Mouse).